A 196-amino-acid polypeptide reads, in one-letter code: Mpv17-like protein (196 aa).

Topologically, residues 1-16 (MVSWWQALTRAAGRYP) are cytoplasmic. The targeting to peroxisomes stretch occupies residues 16 to 55 (PWPANVLLYAGFFSGGDALQQVLRGGPADWQHTRHVATVA). The chain crosses the membrane as a helical span at residues 17-34 (WPANVLLYAGFFSGGDAL). Topologically, residues 35 to 50 (QQVLRGGPADWQHTRH) are lumenal. Residues 51–67 (VATVAVAFHANLNYVWL) form a helical membrane-spanning segment. Over 68–90 (NLLERALPGRAPRTILAKVLCDQ) the chain is Cytoplasmic. The helical transmembrane segment at 91–108 (ALGGPVYVSTFYAGMSIL) threads the bilayer. Over 109 to 150 (QGKDDIFLDMRQKFWNTYKSGLMYWPFVQLINFSLIPIRWRT) the chain is Lumenal. A helical membrane pass occupies residues 151–167 (AYTGLCGFLWATFLCFS). Topologically, residues 168 to 196 (QQEGDGTFKSAFTFRRIKVTNEVEKPSEK) are cytoplasmic.

This sequence belongs to the peroxisomal membrane protein PXMP2/4 family.

The protein localises to the peroxisome membrane. In terms of biological role, participates in reactive oxygen species metabolism by up- or down-regulation of the genes of antioxidant enzymes. Protective against the mitochondrial apoptotic cascade. The sequence is that of Mpv17-like protein (MPV17L) from Bos taurus (Bovine).